The chain runs to 593 residues: Proteasome-associated ATPase (593 aa).

Positions 5-94 form a coiled coil; it reads DDADSRAARW…KEEIDRLAQP (90 aa). 281–286 contacts ATP; sequence GCGKTL. A disordered region spans residues 574-593; the sequence is GKGADAGRSIETASNTGQYL. Positions 584 to 593 are enriched in polar residues; that stretch reads ETASNTGQYL. The docks into pockets in the proteasome alpha-ring stretch occupies residues 592-593; that stretch reads YL.

This sequence belongs to the AAA ATPase family. Homohexamer. Assembles into a hexameric ring structure that caps the 20S proteasome core. Strongly interacts with the prokaryotic ubiquitin-like protein Pup through a hydrophobic interface; the interacting region of ARC lies in its N-terminal coiled-coil domain. There is one Pup binding site per ARC hexamer ring. Upon ATP-binding, the C-terminus of ARC interacts with the alpha-rings of the proteasome core, possibly by binding to the intersubunit pockets.

It functions in the pathway protein degradation; proteasomal Pup-dependent pathway. In terms of biological role, ATPase which is responsible for recognizing, binding, unfolding and translocation of pupylated proteins into the bacterial 20S proteasome core particle. May be essential for opening the gate of the 20S proteasome via an interaction with its C-terminus, thereby allowing substrate entry and access to the site of proteolysis. Thus, the C-termini of the proteasomal ATPase may function like a 'key in a lock' to induce gate opening and therefore regulate proteolysis. In Salinispora tropica (strain ATCC BAA-916 / DSM 44818 / JCM 13857 / NBRC 105044 / CNB-440), this protein is Proteasome-associated ATPase.